The primary structure comprises 101 residues: Ubiquitin-like protein SMT3 (101 aa).

Serine 2 carries the post-translational modification N-acetylserine. 2 positions are modified to phosphoserine: serine 2 and serine 4. The region spanning threonine 22 to glycine 98 is the Ubiquitin-like domain. Residue glycine 98 forms a Glycyl lysine isopeptide (Gly-Lys) (interchain with K-? in acceptor proteins) linkage. A propeptide spanning residues alanine 99–tyrosine 101 is cleaved from the precursor.

The protein belongs to the ubiquitin family. SUMO subfamily. As to quaternary structure, activated by a E1 ligase composed of AOS1 and UBA2.

Not known; suppressor of MIF2 mutations. The sequence is that of Ubiquitin-like protein SMT3 (SMT3) from Saccharomyces cerevisiae (strain ATCC 204508 / S288c) (Baker's yeast).